A 469-amino-acid polypeptide reads, in one-letter code: Glutamate--tRNA ligase (469 aa).

Positions 11–21 match the 'HIGH' region motif; sequence PSPTGFIHLGN. The segment covering 118–131 has biased composition (basic and acidic residues); it reads GEKPRYDGTWRPEP. The interval 118-139 is disordered; sequence GEKPRYDGTWRPEPGKVLPEPP. A 'KMSKS' region motif is present at residues 243 to 247; it reads KMSKR. Lys246 provides a ligand contact to ATP.

This sequence belongs to the class-I aminoacyl-tRNA synthetase family. Glutamate--tRNA ligase type 1 subfamily. Monomer.

It localises to the cytoplasm. It carries out the reaction tRNA(Glu) + L-glutamate + ATP = L-glutamyl-tRNA(Glu) + AMP + diphosphate. In terms of biological role, catalyzes the attachment of glutamate to tRNA(Glu) in a two-step reaction: glutamate is first activated by ATP to form Glu-AMP and then transferred to the acceptor end of tRNA(Glu). This is Glutamate--tRNA ligase from Burkholderia pseudomallei (strain 1106a).